The chain runs to 120 residues: UPF0295 protein Aflv_0370 (120 aa).

2 helical membrane-spanning segments follow: residues 12 to 32 and 42 to 62; these read IRTF…GGIF and LFMI…FWIG.

This sequence belongs to the UPF0295 family.

Its subcellular location is the cell membrane. The polypeptide is UPF0295 protein Aflv_0370 (Anoxybacillus flavithermus (strain DSM 21510 / WK1)).